Reading from the N-terminus, the 145-residue chain is MPRHTSAHKRKPSTPRRRSPPASLPPPAGSRTRRHSGPSGSSPRKKHKFRPGTRALMEIRKYQKSTGLLLRKAPFSRLVREVCQMFSREHMMWQGYALMALQEAAEAFMVRLFSDANLCAIHAKRVTLFPRDIQLARRIRGVEHM.

Positions 1 to 19 are enriched in basic residues; that stretch reads MPRHTSAHKRKPSTPRRRS. Positions 1–54 are disordered; that stretch reads MPRHTSAHKRKPSTPRRRSPPASLPPPAGSRTRRHSGPSGSSPRKKHKFRPGTR. The residue at position 19 (serine 19) is a Phosphoserine. The tract at residues 51–145 is H3-like; that stretch reads PGTRALMEIR…ARRIRGVEHM (95 aa).

The protein belongs to the histone H3 family. In terms of assembly, component of centromeric nucleosomes, where DNA is wrapped around a histone octamer core. The octamer contains two molecules each of H2A, H2B, CENPA and H4 assembled in one CENPA-H4 heterotetramer and two H2A-H2B heterodimers. CENPA modulates the DNA-binding characteristics of nucleosomes so that protruding DNA ends have higher flexibility than in nucleosomes containing conventional histone H3.

The protein resides in the nucleus. It is found in the chromosome. Its subcellular location is the centromere. Its function is as follows. Histone H3-like nucleosomal protein that is specifically found in centromeric nucleosomes. Replaces conventional H3 in the nucleosome core of centromeric chromatin that serves as an assembly site for the inner kinetochore. The presence of CENPA subtly modifies the nucleosome structure and the way DNA is wrapped around the nucleosome and gives rise to protruding DNA ends that are less well-ordered and rigid compared to nucleosomes containing histone H3. May serve as an epigenetic mark that propagates centromere identity through replication and cell division. Required for recruitment and assembly of kinetochore proteins, and as a consequence required for progress through mitosis, chromosome segregation and cytokinesis. This chain is Histone H3-like centromeric protein A (cenpa), found in Danio rerio (Zebrafish).